The sequence spans 298 residues: tRNA-cytidine(32) 2-sulfurtransferase (298 aa).

Positions 48–53 (SGGKDS) match the PP-loop motif motif. Cys-123, Cys-126, and Cys-214 together coordinate [4Fe-4S] cluster.

The protein belongs to the TtcA family. In terms of assembly, homodimer. Mg(2+) is required as a cofactor. It depends on [4Fe-4S] cluster as a cofactor.

Its subcellular location is the cytoplasm. The catalysed reaction is cytidine(32) in tRNA + S-sulfanyl-L-cysteinyl-[cysteine desulfurase] + AH2 + ATP = 2-thiocytidine(32) in tRNA + L-cysteinyl-[cysteine desulfurase] + A + AMP + diphosphate + H(+). Its pathway is tRNA modification. In terms of biological role, catalyzes the ATP-dependent 2-thiolation of cytidine in position 32 of tRNA, to form 2-thiocytidine (s(2)C32). The sulfur atoms are provided by the cysteine/cysteine desulfurase (IscS) system. The chain is tRNA-cytidine(32) 2-sulfurtransferase from Nitrosospira multiformis (strain ATCC 25196 / NCIMB 11849 / C 71).